The following is a 349-amino-acid chain: DNA integrity scanning protein DisA (349 aa).

The DAC domain maps to 3 to 143 (KQDLMDIIVK…LKYRLKNFDE (141 aa)). Residues G70, V88, and 101 to 105 (TRHRT) each bind ATP.

It belongs to the DisA family. Homooctamer. Requires Mg(2+) as cofactor.

It catalyses the reaction 2 ATP = 3',3'-c-di-AMP + 2 diphosphate. Its function is as follows. Participates in a DNA-damage check-point. DisA forms globular foci that rapidly scan along the chromosomes searching for lesions. Also has diadenylate cyclase activity, catalyzing the condensation of 2 ATP molecules into cyclic di-AMP (c-di-AMP). c-di-AMP likely acts as a signaling molecule that may couple DNA integrity with a cellular process. The chain is DNA integrity scanning protein DisA from Fusobacterium nucleatum subsp. nucleatum (strain ATCC 25586 / DSM 15643 / BCRC 10681 / CIP 101130 / JCM 8532 / KCTC 2640 / LMG 13131 / VPI 4355).